We begin with the raw amino-acid sequence, 427 residues long: 3-phosphoshikimate 1-carboxyvinyltransferase (427 aa).

3-phosphoshikimate-binding residues include Lys22, Ser23, and Arg27. Lys22 lines the phosphoenolpyruvate pocket. Residues Gly96 and Arg124 each contribute to the phosphoenolpyruvate site. Residues Ser170, Ser171, Gln172, Ser198, Asp314, Asn337, and Lys341 each coordinate 3-phosphoshikimate. Residue Gln172 coordinates phosphoenolpyruvate. Asp314 functions as the Proton acceptor in the catalytic mechanism. Positions 345, 387, and 412 each coordinate phosphoenolpyruvate.

This sequence belongs to the EPSP synthase family. As to quaternary structure, monomer.

It is found in the cytoplasm. The catalysed reaction is 3-phosphoshikimate + phosphoenolpyruvate = 5-O-(1-carboxyvinyl)-3-phosphoshikimate + phosphate. It functions in the pathway metabolic intermediate biosynthesis; chorismate biosynthesis; chorismate from D-erythrose 4-phosphate and phosphoenolpyruvate: step 6/7. Catalyzes the transfer of the enolpyruvyl moiety of phosphoenolpyruvate (PEP) to the 5-hydroxyl of shikimate-3-phosphate (S3P) to produce enolpyruvyl shikimate-3-phosphate and inorganic phosphate. This Sulfurovum sp. (strain NBC37-1) protein is 3-phosphoshikimate 1-carboxyvinyltransferase.